Consider the following 283-residue polypeptide: Secretory carrier-associated membrane protein 2 (283 aa).

Residues 1-47 are disordered; that stretch reads MARHDPNPFADEEINPFANHTSVPPASNSYLKPLPPEPYDRGATVDI. At 1–123 the chain is on the cytoplasmic side; the sequence is MARHDPNPFA…LQKIQYVAFT (123 aa). Polar residues predominate over residues 18 to 30; it reads ANHTSVPPASNSY. Positions 50–87 form a coiled coil; sequence DSGNDLRAKEMELQAKENELKRKEQELKRREDAIARTG. 4 helical membrane-spanning segments follow: residues 124-144, 151-171, 186-206, and 234-254; these read TLLG…VAWI, IWLL…VLWY, FGAF…AAVA, and IMYF…IWVI. Over 255–283 the chain is Cytoplasmic; it reads QQVYAYFRGSGKAAEMKREATKSTLMRAL.

The protein belongs to the SCAMP family.

It localises to the cell membrane. The protein resides in the cytoplasmic vesicle. Its subcellular location is the secretory vesicle membrane. Functionally, probably involved in membrane trafficking. The protein is Secretory carrier-associated membrane protein 2 (SCAMP2) of Arabidopsis thaliana (Mouse-ear cress).